The chain runs to 85 residues: Small ribosomal subunit protein bS16 (85 aa).

It belongs to the bacterial ribosomal protein bS16 family.

In Clostridium kluyveri (strain NBRC 12016), this protein is Small ribosomal subunit protein bS16.